A 225-amino-acid chain; its full sequence is Cytidylate kinase (225 aa).

11-19 (GPAGVGKST) is a binding site for ATP.

This sequence belongs to the cytidylate kinase family. Type 1 subfamily.

The protein localises to the cytoplasm. It catalyses the reaction CMP + ATP = CDP + ADP. It carries out the reaction dCMP + ATP = dCDP + ADP. The polypeptide is Cytidylate kinase (Lawsonia intracellularis (strain PHE/MN1-00)).